The chain runs to 182 residues: Lipid A acyltransferase PagP (182 aa).

Positions 1-21 (MTQYFRSLAFFLLPVPATAMA) are cleaved as a signal peptide. Cys22 carries N-palmitoyl cysteine lipidation. Cys22 is lipidated: S-diacylglycerol cysteine. Active-site residues include His55, Asp98, and Ser99.

It belongs to the lipid A palmitoyltransferase family. As to quaternary structure, homodimer.

Its subcellular location is the cell outer membrane. The enzyme catalyses a lipid A + a 1,2-diacyl-sn-glycero-3-phosphocholine = a hepta-acyl lipid A + a 2-acyl-sn-glycero-3-phosphocholine. The catalysed reaction is a lipid IVA + a 1,2-diacyl-sn-glycero-3-phosphocholine = a lipid IVB + a 2-acyl-sn-glycero-3-phosphocholine. It catalyses the reaction a lipid IIA + a 1,2-diacyl-sn-glycero-3-phosphocholine = a lipid IIB + a 2-acyl-sn-glycero-3-phosphocholine. Transfers a fatty acid residue from the sn-1 position of a phospholipid to the N-linked hydroxyfatty acid chain on the proximal unit of lipid A or its precursors. The protein is Lipid A acyltransferase PagP of Bordetella pertussis (strain CS).